A 271-amino-acid chain; its full sequence is Orotidine 5'-phosphate decarboxylase (271 aa).

K97 serves as the catalytic Proton donor.

The protein belongs to the OMP decarboxylase family. Type 2 subfamily.

It catalyses the reaction orotidine 5'-phosphate + H(+) = UMP + CO2. It participates in pyrimidine metabolism; UMP biosynthesis via de novo pathway; UMP from orotate: step 2/2. The polypeptide is Orotidine 5'-phosphate decarboxylase (Leptospira borgpetersenii serovar Hardjo-bovis (strain JB197)).